The sequence spans 175 residues: Large ribosomal subunit protein uL10 (175 aa).

Belongs to the universal ribosomal protein uL10 family. As to quaternary structure, part of the ribosomal stalk of the 50S ribosomal subunit. The N-terminus interacts with L11 and the large rRNA to form the base of the stalk. The C-terminus forms an elongated spine to which L12 dimers bind in a sequential fashion forming a multimeric L10(L12)X complex.

Forms part of the ribosomal stalk, playing a central role in the interaction of the ribosome with GTP-bound translation factors. The chain is Large ribosomal subunit protein uL10 (rplJ) from Xylella fastidiosa (strain 9a5c).